A 92-amino-acid polypeptide reads, in one-letter code: Acylphosphatase (92 aa).

One can recognise an Acylphosphatase-like domain in the interval Arg5 to Thr92. Catalysis depends on residues Arg20 and Asn38.

It belongs to the acylphosphatase family.

The enzyme catalyses an acyl phosphate + H2O = a carboxylate + phosphate + H(+). This Chlorobaculum tepidum (strain ATCC 49652 / DSM 12025 / NBRC 103806 / TLS) (Chlorobium tepidum) protein is Acylphosphatase (acyP).